Consider the following 498-residue polypeptide: L-amino acid oxidase (498 aa).

The signal sequence occupies residues 1–11 (SLLFLAAVGSC). An intrachain disulfide couples cysteine 21 to cysteine 184. Residues 54-55 (MS), 74-75 (EA), 74-78 (EASER), arginine 82, and 98-101 (GPMR) each bind FAD. Arginine 101 contacts substrate. N-linked (GlcNAc...) asparagine glycosylation is present at asparagine 183. Histidine 234 is a binding site for substrate. FAD is bound at residue valine 272. Cysteines 342 and 423 form a disulfide. Tyrosine 383 provides a ligand contact to substrate. FAD contacts are provided by residues glutamate 468, 475 to 480 (GWIDST), and 476 to 480 (WIDST). 475–476 (GW) serves as a coordination point for substrate.

It belongs to the flavin monoamine oxidase family. FIG1 subfamily. Homodimer; non-covalently linked. FAD serves as cofactor. In terms of processing, N-glycosylated. Contains 18.73% carbohydrates. In terms of tissue distribution, expressed by the venom gland.

The protein resides in the secreted. It catalyses the reaction an L-alpha-amino acid + O2 + H2O = a 2-oxocarboxylate + H2O2 + NH4(+). The enzyme catalyses L-leucine + O2 + H2O = 4-methyl-2-oxopentanoate + H2O2 + NH4(+). Strongly inhibited by glutathione, and moderately inhibited by PMSF, acetate iodine and glutamic acid. Is also inhibited by Zn(2+) ions, but not by Ca(2+), Mg(2+) and Mn(2+). Functionally, catalyzes an oxidative deamination of predominantly hydrophobic and aromatic L-amino acids, thus producing hydrogen peroxide that may contribute to the diverse toxic effects of this enzyme. This enzyme shows activity on L-Leu. This enzyme inhibits platelet aggregation in human platelet rich plasma induced by ADP (IC(50)=3.2 mg/mL), and shows antibacterial activities on both Gram-positive and Gram-negative bacteria (P.aeruginosa, V.cholerae, S.aureus, E.faecalis and E.coli). These two effects are due to hydrogen peroxide, since they are inhibited by catalase. It also induces edema in mouse paw pads but does not show hemolytic activity. This protein may also have activities in hemorrhage, and apoptosis. This Bothrops pictus (Desert lancehead) protein is L-amino acid oxidase.